A 116-amino-acid polypeptide reads, in one-letter code: Photosystem II reaction center Psb28 protein (116 aa).

It belongs to the Psb28 family. In terms of assembly, part of the photosystem II complex.

It localises to the plastid. The protein localises to the chloroplast thylakoid membrane. The polypeptide is Photosystem II reaction center Psb28 protein (Guillardia theta (Cryptophyte)).